The chain runs to 315 residues: Ribosomal RNA small subunit methyltransferase H (315 aa).

Residues 37–39 (GGH), aspartate 57, aspartate 105, and glutamine 112 each bind S-adenosyl-L-methionine.

Belongs to the methyltransferase superfamily. RsmH family.

The protein localises to the cytoplasm. The enzyme catalyses cytidine(1402) in 16S rRNA + S-adenosyl-L-methionine = N(4)-methylcytidine(1402) in 16S rRNA + S-adenosyl-L-homocysteine + H(+). Specifically methylates the N4 position of cytidine in position 1402 (C1402) of 16S rRNA. This chain is Ribosomal RNA small subunit methyltransferase H, found in Nitrosococcus oceani (strain ATCC 19707 / BCRC 17464 / JCM 30415 / NCIMB 11848 / C-107).